Reading from the N-terminus, the 606-residue chain is UvrABC system protein C (606 aa).

In terms of domain architecture, GIY-YIG spans 14-93 (QNPGVYLMKD…IKKHSPRYNV (80 aa)). Positions 203–238 (PDLINRLKFEMQTEADLEHFERAAQIRDTILAIQTT) constitute a UVR domain.

It belongs to the UvrC family. In terms of assembly, interacts with UvrB in an incision complex.

It localises to the cytoplasm. In terms of biological role, the UvrABC repair system catalyzes the recognition and processing of DNA lesions. UvrC both incises the 5' and 3' sides of the lesion. The N-terminal half is responsible for the 3' incision and the C-terminal half is responsible for the 5' incision. The protein is UvrABC system protein C of Desulforapulum autotrophicum (strain ATCC 43914 / DSM 3382 / VKM B-1955 / HRM2) (Desulfobacterium autotrophicum).